We begin with the raw amino-acid sequence, 88 residues long: Protein K3 (88 aa).

An S1 motif domain is found at 8–82 (LPNAGDVIKG…TKGYIDVNYK (75 aa)). 2 binding to host EIF2AK2/PKR regions span residues 43-53 (SVKMHMDRYVE) and 74-79 (KGYIDV).

This sequence belongs to the poxviridae K3 protein family. As to quaternary structure, interacts with host EIF2AK2/PKR kinase.

Viral mimic of EIF2S1/eIF-2alpha that acts as a pseudosubstrate for EIF2AK2/PKR kinase. Inhibits therefore EIF2S1/eIF-2alpha phosphorylation by host EIF2AK2/PKR kinase and prevents protein synthesis shutoff. Determinant of host species specificity. The protein is Protein K3 of Vaccinia virus (strain Western Reserve) (VACV).